Consider the following 239-residue polypeptide: Purine nucleoside phosphorylase DeoD-type (239 aa).

An a purine D-ribonucleoside-binding site is contributed by His-5. Residues Gly-21, Arg-25, Arg-44, and 88–91 contribute to the phosphate site; that span reads RVGS. Residues 180–182 and 204–205 contribute to the a purine D-ribonucleoside site; these read EME and SD. The Proton donor role is filled by Asp-205.

It belongs to the PNP/UDP phosphorylase family. As to quaternary structure, homohexamer; trimer of homodimers.

The enzyme catalyses a purine D-ribonucleoside + phosphate = a purine nucleobase + alpha-D-ribose 1-phosphate. The catalysed reaction is a purine 2'-deoxy-D-ribonucleoside + phosphate = a purine nucleobase + 2-deoxy-alpha-D-ribose 1-phosphate. Functionally, catalyzes the reversible phosphorolytic breakdown of the N-glycosidic bond in the beta-(deoxy)ribonucleoside molecules, with the formation of the corresponding free purine bases and pentose-1-phosphate. The chain is Purine nucleoside phosphorylase DeoD-type from Yersinia pestis bv. Antiqua (strain Antiqua).